We begin with the raw amino-acid sequence, 392 residues long: GTPase Obg (392 aa).

Positions 1 to 159 constitute an Obg domain; it reads MKFIDEALIR…RDLQLELMLL (159 aa). One can recognise an OBG-type G domain in the interval 160–333; that stretch reads ADVGMLGLPN…LCRDIMDFIE (174 aa). GTP is bound by residues 166–173, 191–195, 213–216, 283–286, and 314–316; these read GLPNAGKS, FTTLV, DIPG, NKID, and SAA. 2 residues coordinate Mg(2+): serine 173 and threonine 193. The tract at residues 361 to 392 is disordered; it reads SEQVFTEDDQEEDDWDDWSEDDEEGVEIIYKP. A compositionally biased stretch (acidic residues) spans 365 to 386; the sequence is FTEDDQEEDDWDDWSEDDEEGV.

Belongs to the TRAFAC class OBG-HflX-like GTPase superfamily. OBG GTPase family. As to quaternary structure, monomer. It depends on Mg(2+) as a cofactor.

The protein resides in the cytoplasm. An essential GTPase which binds GTP, GDP and possibly (p)ppGpp with moderate affinity, with high nucleotide exchange rates and a fairly low GTP hydrolysis rate. Plays a role in control of the cell cycle, stress response, ribosome biogenesis and in those bacteria that undergo differentiation, in morphogenesis control. This chain is GTPase Obg, found in Histophilus somni (strain 2336) (Haemophilus somnus).